Here is a 662-residue protein sequence, read N- to C-terminus: UvrABC system protein B (662 aa).

Positions 31–188 constitute a Helicase ATP-binding domain; that stretch reads DNIEGGEKAQ…NDLVDIQFER (158 aa). 44-51 is a binding site for ATP; sequence GATGTGKT. The Beta-hairpin signature appears at 97 to 120; that stretch reads YYDYYQPEAYVPSSDTYIEKDSSV. A Helicase C-terminal domain is found at 435–601; sequence QIDDLLGEIN…TIKKEIRDLI (167 aa). The UVR domain maps to 626 to 661; sequence KELVKKLEKQMQEAVEVLDFELAAQIRDMMLEVKAL.

The protein belongs to the UvrB family. Forms a heterotetramer with UvrA during the search for lesions. Interacts with UvrC in an incision complex.

It is found in the cytoplasm. Its function is as follows. The UvrABC repair system catalyzes the recognition and processing of DNA lesions. A damage recognition complex composed of 2 UvrA and 2 UvrB subunits scans DNA for abnormalities. Upon binding of the UvrA(2)B(2) complex to a putative damaged site, the DNA wraps around one UvrB monomer. DNA wrap is dependent on ATP binding by UvrB and probably causes local melting of the DNA helix, facilitating insertion of UvrB beta-hairpin between the DNA strands. Then UvrB probes one DNA strand for the presence of a lesion. If a lesion is found the UvrA subunits dissociate and the UvrB-DNA preincision complex is formed. This complex is subsequently bound by UvrC and the second UvrB is released. If no lesion is found, the DNA wraps around the other UvrB subunit that will check the other stand for damage. The chain is UvrABC system protein B from Streptococcus pneumoniae (strain P1031).